A 450-amino-acid chain; its full sequence is Folate synthesis bifunctional protein (450 aa).

The tract at residues 1–166 (MTSWNFVCLS…TFAELAAIYP (166 aa)) is HPPK. The 262-residue stretch at 180-441 (TQIMGIVNIT…QVEGNRRALA (262 aa)) folds into the Pterin-binding domain. The DHPS stretch occupies residues 182–450 (IMGIVNITDN…AAAAWAGMFV (269 aa)). N187 contacts Mg(2+). (7,8-dihydropterin-6-yl)methyl diphosphate is bound by residues T227, D267, N287, D358, K395, and 429–431 (RVH).

This sequence in the C-terminal section; belongs to the DHPS family. The protein in the N-terminal section; belongs to the HPPK family. Requires Mg(2+) as cofactor.

It catalyses the reaction 6-hydroxymethyl-7,8-dihydropterin + ATP = (7,8-dihydropterin-6-yl)methyl diphosphate + AMP + H(+). The catalysed reaction is (7,8-dihydropterin-6-yl)methyl diphosphate + 4-aminobenzoate = 7,8-dihydropteroate + diphosphate. The protein operates within cofactor biosynthesis; tetrahydrofolate biosynthesis; 2-amino-4-hydroxy-6-hydroxymethyl-7,8-dihydropteridine diphosphate from 7,8-dihydroneopterin triphosphate: step 4/4. Its pathway is cofactor biosynthesis; tetrahydrofolate biosynthesis; 7,8-dihydrofolate from 2-amino-4-hydroxy-6-hydroxymethyl-7,8-dihydropteridine diphosphate and 4-aminobenzoate: step 1/2. The polypeptide is Folate synthesis bifunctional protein (folKP) (Chlamydia trachomatis serovar D (strain ATCC VR-885 / DSM 19411 / UW-3/Cx)).